Here is a 284-residue protein sequence, read N- to C-terminus: Putative transcription factor kapC (284 aa).

Pro residues predominate over residues Met-1–His-10. Positions Met-1–Gln-121 are disordered. The span at His-26–Gln-40 shows a compositional bias: low complexity. Over residues Gln-41–Met-54 the composition is skewed to pro residues. A compositionally biased stretch (polar residues) spans Asn-57–Ile-67. Residues Pro-102 to Leu-165 form the bZIP domain. Positions Leu-103–Tyr-126 are basic motif. A compositionally biased stretch (low complexity) spans Arg-108 to Ala-118. Residues Leu-130 to Leu-161 are leucine-zipper. A disordered region spans residues Glu-174–Ser-284. A compositionally biased stretch (low complexity) spans Pro-193–Ser-222.

The protein belongs to the bZIP family.

It is found in the nucleus. Functionally, putative transcription factor. The protein is Putative transcription factor kapC (kapC) of Aspergillus oryzae (strain ATCC 42149 / RIB 40) (Yellow koji mold).